Reading from the N-terminus, the 101-residue chain is Helix-loop-helix protein 17 (101 aa).

The basic motif stretch occupies residues 14-27; the sequence is GVRLSINLRERCRM. In terms of domain architecture, bHLH spans 14 to 68; that stretch reads GVRLSINLRERCRMHDLNEALDDLRAVIPYAHGGSVRKLSKIATLLLAKNHIIMQ. The interval 28–68 is helix-loop-helix motif; sequence HDLNEALDDLRAVIPYAHGGSVRKLSKIATLLLAKNHIIMQ.

Expressed in neuronal tissues of the head, including sheath cells of the cephalic sensilla (CEPsh) glia.

It is found in the nucleus. In terms of biological role, probable transcription factor that regulates the expression of dopamine receptors dop-1, dop-2 and dop-3 and thus dopamine-dependent behaviors. May act redundantly with hlh-31 and hlh-32 to regulate ventral CEPsh glia functions. May play a role in chemotactic responses in larvae. This is Helix-loop-helix protein 17 from Caenorhabditis elegans.